We begin with the raw amino-acid sequence, 369 residues long: Peptide chain release factor 2 (369 aa).

Gln-249 bears the N5-methylglutamine mark.

It belongs to the prokaryotic/mitochondrial release factor family. Methylated by PrmC. Methylation increases the termination efficiency of RF2.

The protein resides in the cytoplasm. Its function is as follows. Peptide chain release factor 2 directs the termination of translation in response to the peptide chain termination codons UGA and UAA. This is Peptide chain release factor 2 from Thermosipho africanus (strain TCF52B).